The sequence spans 444 residues: Adiponectin receptor protein (444 aa).

Residues 1 to 13 (MDSATNLLEQQGS) are compositionally biased toward polar residues. Residues 1–24 (MDSATNLLEQQGSAADVSGGSHPA) are disordered. Residues 1–204 (MDSATNLLEQ…KSIFRVHTET (204 aa)) lie on the Cytoplasmic side of the membrane. A helical membrane pass occupies residues 205 to 225 (GNIWTHLLGCIAFIGVALYFI). Over 226–237 (SRPSVEIQTQEK) the chain is Extracellular. A helical membrane pass occupies residues 238 to 258 (IVFGAFFIGAIVCLGFSFAFH). Residue His258 coordinates Zn(2+). At 259-276 (TLSCHSVEMGRLFSKLDY) the chain is on the cytoplasmic side. The chain crosses the membrane as a helical span at residues 277–297 (CGIALLIMGSFVPWLYYGFYC). Topologically, residues 298–302 (HYQPK) are extracellular. The chain crosses the membrane as a helical span at residues 303–323 (VIYLSVVSILGILSIVVSLWD). The Cytoplasmic portion of the chain corresponds to 324–334 (KFSEPALRPLR). The chain crosses the membrane as a helical span at residues 335–355 (AGVFMSFGLSGVIPAIHYSIM). The Extracellular portion of the chain corresponds to 356-365 (EGWFSQMSRA). Residues 366–386 (SLGWLILMGLLYILGALLYAL) traverse the membrane as a helical segment. At 387-405 (RVPERWFPGKFDIWGQSHQ) the chain is on the cytoplasmic side. His404 and His408 together coordinate Zn(2+). A helical membrane pass occupies residues 406–426 (IFHILVIAAAFVHYHGISEMA). The Extracellular segment spans residues 427-444 (MYRVMYSECTVPIEPITF).

The protein belongs to the ADIPOR family. In larval and adult brain, expressed in insulin-producing cells and in neurons of the subesophageal region. Also expressed in lateral neurons of the adult brain (at protein level). In third instar larvae, expressed in central nervous system (CNS), imaginal disk, salivary gland, fat body, gut and malphigian tubules.

It localises to the cell membrane. Adiponectin receptor. In insulin-producing cells, regulates insulin secretion and controls glucose and lipid metabolism. In Drosophila melanogaster (Fruit fly), this protein is Adiponectin receptor protein (AdipoR).